We begin with the raw amino-acid sequence, 539 residues long: MVSESITPQQWISYGITGYRELVYNPGYDQLFAEEIDPALSGFERGTLTQSGAVAVDTGIFTGRSPFDKYVVRDDKTRDTLWWSDQGKGANDNHPLDQQTWVHLKRRVGKQLSGKRLFVIDAFCGANEDSRLRVRFVTEVAWQAHFVKNMFIRPSDEELRDFEPDFVVLNGAKCTNPDWREQGLHSENFVAFNLTEGIQLIGGTWYGGEMKKGLFSVMNYLLPLKGIASMHCSANVGTDDDVALFFGLSGTGKTTLSTDPRRRLIGDDEHGWDDDGVFNFEGGCYAKTIRLSPEAEPEIYQAIRRNALLENVVVRADGSVDYDDGSKTENARVSYPIDHIDNIVKPVSRAGHATRVIFLTADAFGVLPPVASLSMEQAQYHFLSGFTAKLGGTERGVVAPVPTFSACFGAAFLSLHPTAYADVLAKRMHAAGARAYLVNTGWNGSGKRISLKDTRTIINAILRSDIDDAPTATLPVFNLTIPTALPGVNGAILDPRTTYASVDEWRAKADDLAQRFIDNFSKFTDTPAGVALVSAGPQR.

Positions 64, 206, and 212 each coordinate substrate. ATP contacts are provided by residues lysine 212, histidine 231, and 247 to 255 (GLSGTGKTT). Mn(2+) is bound by residues lysine 212 and histidine 231. Mn(2+) is bound at residue aspartate 268. ATP is bound by residues glutamate 296, arginine 332, 448-449 (RI), and threonine 454. Substrate is bound at residue arginine 332.

The protein belongs to the phosphoenolpyruvate carboxykinase (ATP) family. Monomer. The cofactor is Mn(2+).

The protein localises to the cytoplasm. It catalyses the reaction oxaloacetate + ATP = phosphoenolpyruvate + ADP + CO2. It functions in the pathway carbohydrate biosynthesis; gluconeogenesis. In terms of biological role, involved in the gluconeogenesis. Catalyzes the conversion of oxaloacetate (OAA) to phosphoenolpyruvate (PEP) through direct phosphoryl transfer between the nucleoside triphosphate and OAA. This Sodalis glossinidius (strain morsitans) protein is Phosphoenolpyruvate carboxykinase (ATP).